The sequence spans 452 residues: Glutamate--tRNA ligase 2 (452 aa).

A 'HIGH' region motif is present at residues 8-18 (PSPTGRLHVGN). The 'KMSKS' region motif lies at 246–250 (KLSKR). Position 249 (K249) interacts with ATP.

The protein belongs to the class-I aminoacyl-tRNA synthetase family. Glutamate--tRNA ligase type 1 subfamily. As to quaternary structure, monomer.

Its subcellular location is the cytoplasm. The catalysed reaction is tRNA(Glu) + L-glutamate + ATP = L-glutamyl-tRNA(Glu) + AMP + diphosphate. Functionally, catalyzes the attachment of glutamate to tRNA(Glu) in a two-step reaction: glutamate is first activated by ATP to form Glu-AMP and then transferred to the acceptor end of tRNA(Glu). The protein is Glutamate--tRNA ligase 2 of Erythrobacter litoralis (strain HTCC2594).